A 300-amino-acid polypeptide reads, in one-letter code: 1D-myo-inositol 2-acetamido-2-deoxy-alpha-D-glucopyranoside deacetylase (300 aa).

Positions 13, 16, and 147 each coordinate Zn(2+).

It belongs to the MshB deacetylase family. Requires Zn(2+) as cofactor.

It catalyses the reaction 1D-myo-inositol 2-acetamido-2-deoxy-alpha-D-glucopyranoside + H2O = 1D-myo-inositol 2-amino-2-deoxy-alpha-D-glucopyranoside + acetate. In terms of biological role, catalyzes the deacetylation of 1D-myo-inositol 2-acetamido-2-deoxy-alpha-D-glucopyranoside (GlcNAc-Ins) in the mycothiol biosynthesis pathway. The sequence is that of 1D-myo-inositol 2-acetamido-2-deoxy-alpha-D-glucopyranoside deacetylase from Mycolicibacterium paratuberculosis (strain ATCC BAA-968 / K-10) (Mycobacterium paratuberculosis).